Here is a 105-residue protein sequence, read N- to C-terminus: MALRYPMAVGLNKGHKVTKNVGKPRHSRRRGRLTKHTKFVRDMIREVCGFAPYERRAMELLKVSKDKRALKFIKKRVGTHIRAKRKREELSNVLAAMRKAAAKKD.

N6-acetyllysine is present on K62.

It belongs to the eukaryotic ribosomal protein eL36 family. As to quaternary structure, component of the large ribosomal subunit.

The protein resides in the cytoplasm. It localises to the cytosol. In terms of biological role, component of the large ribosomal subunit. The ribosome is a large ribonucleoprotein complex responsible for the synthesis of proteins in the cell. The sequence is that of Large ribosomal subunit protein eL36 (RPL36) from Bos taurus (Bovine).